The primary structure comprises 273 residues: Dermonecrotic toxin SdSicTox-betaIIB1bxiv (273 aa).

His-4 is an active-site residue. Residues Glu-24 and Asp-26 each coordinate Mg(2+). His-40 (nucleophile) is an active-site residue. Disulfide bonds link Cys-44-Cys-50 and Cys-46-Cys-189. Position 84 (Asp-84) interacts with Mg(2+).

This sequence belongs to the arthropod phospholipase D family. Class II subfamily. Requires Mg(2+) as cofactor. As to expression, expressed by the venom gland.

Its subcellular location is the secreted. The catalysed reaction is an N-(acyl)-sphingosylphosphocholine = an N-(acyl)-sphingosyl-1,3-cyclic phosphate + choline. It catalyses the reaction an N-(acyl)-sphingosylphosphoethanolamine = an N-(acyl)-sphingosyl-1,3-cyclic phosphate + ethanolamine. The enzyme catalyses a 1-acyl-sn-glycero-3-phosphocholine = a 1-acyl-sn-glycero-2,3-cyclic phosphate + choline. It carries out the reaction a 1-acyl-sn-glycero-3-phosphoethanolamine = a 1-acyl-sn-glycero-2,3-cyclic phosphate + ethanolamine. Its function is as follows. Dermonecrotic toxins cleave the phosphodiester linkage between the phosphate and headgroup of certain phospholipids (sphingolipid and lysolipid substrates), forming an alcohol (often choline) and a cyclic phosphate. This toxin acts on sphingomyelin (SM). It may also act on ceramide phosphoethanolamine (CPE), lysophosphatidylcholine (LPC) and lysophosphatidylethanolamine (LPE), but not on lysophosphatidylserine (LPS), and lysophosphatidylglycerol (LPG). It acts by transphosphatidylation, releasing exclusively cyclic phosphate products as second products. Induces dermonecrosis, hemolysis, increased vascular permeability, edema, inflammatory response, and platelet aggregation. The chain is Dermonecrotic toxin SdSicTox-betaIIB1bxiv from Sicarius cf. damarensis (strain GJB-2008) (Six-eyed sand spider).